The primary structure comprises 148 residues: Hemoglobin subunit beta (148 aa).

The region spanning 3-148 is the Globin domain; sequence DWTDAERSAI…VVSALGRQYH (146 aa). Heme b is bound by residues His64 and His93.

The protein belongs to the globin family. In terms of assembly, heterotetramer of two alpha chains and two beta chains. As to expression, red blood cells.

Its function is as follows. Involved in oxygen transport from gills to the various peripheral tissues. The protein is Hemoglobin subunit beta (hbb) of Oncorhynchus nerka (Sockeye salmon).